We begin with the raw amino-acid sequence, 119 residues long: Beta-2-microglobulin (119 aa).

A signal peptide spans 1–20 (MAPFVAIALLVLLSLSGLEA). One can recognise an Ig-like C1-type domain in the interval 25–114 (PKIQVYSRHP…VTFSTPKTVK (90 aa)). Cys-45 and Cys-100 are oxidised to a cystine.

It belongs to the beta-2-microglobulin family. As to quaternary structure, heterodimer of an alpha chain and a beta chain. Beta-2-microglobulin is the beta-chain of major histocompatibility complex class I molecules.

It localises to the secreted. Its function is as follows. Component of the class I major histocompatibility complex (MHC). Involved in the presentation of peptide antigens to the immune system. The sequence is that of Beta-2-microglobulin (B2M) from Cheracebus torquatus (Collared titi monkey).